The chain runs to 457 residues: Gustatory and odorant receptor 24 (457 aa).

Topologically, residues 1–115 (MSLYFNADTM…GGTAFVLASP (115 aa)) are cytoplasmic. The chain crosses the membrane as a helical span at residues 116–136 (SMTYCVLFFLLLTVYIAFILL). Residues 137-152 (NRIEIVRTLEGRFEES) are Extracellular-facing. A helical membrane pass occupies residues 153 to 173 (VIAYLFIVNILPILIIPLMWY). Residues 174-209 (ESRKVVSVVNGWVDFETVYRETTGRALELRLRTKAQ) are Cytoplasmic-facing. The helical transmembrane segment at 210-230 (VIAILLPILCSLSVAITHVTM) threads the bilayer. The Extracellular portion of the chain corresponds to 231–237 (VDFKLLQ). Residues 238–258 (VIPYCVLDTITYMMGGYWYMA) form a helical membrane-spanning segment. Topologically, residues 259–309 (CETLSITAKILAEDFQRALRHVGPAAKVSEYRSLWLRLSKLARDTGFSTCY) are cytoplasmic. The helical transmembrane segment at 310–330 (TFTFICLYLFFIITLSIYGLM) threads the bilayer. Residues 331 to 341 (SQISDGFGVKD) lie on the Extracellular side of the membrane. Residues 342 to 362 (IGLAVTAFCSVGLLFYICDEA) form a helical membrane-spanning segment. Residues 363 to 421 (HYASFNVRTNFQKKLLMVELSWMNTDAQTEINMFLRATEMNPSSINLGGFFDVNRTLFK) lie on the Cytoplasmic side of the membrane. The chain crosses the membrane as a helical span at residues 422–442 (SLLATMVTYLVVLLQFQISIP). Residues 443–457 (DEPSAMLMHSNSSHS) are Extracellular-facing. Asn453 carries N-linked (GlcNAc...) asparagine glycosylation.

It belongs to the insect chemoreceptor superfamily. Gustatory receptor (GR) family. Gr21a subfamily. As to expression, carbon dioxide-responsive neurons coexpress GPRgr22 and GPRgr24 in the maxillary palp, at both larval and adult life stages.

It is found in the cell membrane. Gustatory receptor which mediates acceptance or avoidance behavior, depending on its substrates. GPRgr22 and GPRgr24 together are sufficient for olfactory carbon dioxide-chemosensation. The sequence is that of Gustatory and odorant receptor 24 from Anopheles gambiae (African malaria mosquito).